The following is a 490-amino-acid chain: Muscarinic acetylcholine receptor M4 (490 aa).

Topologically, residues 1-42 (MHNLSAQPWQAKMANLTYDNVTLSNRSEVAIQPPTNYKTVEL) are extracellular. Residues Asn-3, Asn-15, Asn-20, and Asn-25 are each glycosylated (N-linked (GlcNAc...) asparagine). A helical membrane pass occupies residues 43–64 (VFIATVTGSLSLVTVVGNILVM). Topologically, residues 65-78 (LSIKVNRQLQTVNN) are cytoplasmic. The chain crosses the membrane as a helical span at residues 79–99 (YFLFSLACADLIIGVFSMNLY). Residues 100 to 116 (TVYIIKGYWPLGAVVCD) lie on the Extracellular side of the membrane. Cys-115 and Cys-195 are disulfide-bonded. The helical transmembrane segment at 117–138 (LWLALDYVVSNASVMNLLIISF) threads the bilayer. Topologically, residues 139–158 (DRYFCVTKPLTYPARRTTKM) are cytoplasmic. A helical transmembrane segment spans residues 159–181 (AGLMIAAAWILSFILWAPAILFW). The Extracellular portion of the chain corresponds to 182–203 (QFIVGKRTVHERECYIQFLSNP). Residues 204-226 (AVTFGTAIAAFYLPVVIMTVLYI) form a helical membrane-spanning segment. Residues 227–412 (HISLASRSRV…AAREKKVTRT (186 aa)) lie on the Cytoplasmic side of the membrane. Basic residues predominate over residues 236-250 (VRRHKPESRKERKGK). A disordered region spans residues 236 to 343 (VRRHKPESRK…HPRVNPTSKW (108 aa)). Over residues 270–285 (RAVEVKEEVRNGKVDD) the composition is skewed to basic and acidic residues. Composition is skewed to polar residues over residues 287–296 (PSAQTEATGQ) and 304–314 (NESSTVSMTQT). A helical membrane pass occupies residues 413-433 (IFAILLAFILTWTPYNVMVLI). Residues 434–447 (NTFCETCVPETVWS) lie on the Extracellular side of the membrane. Residues 448 to 467 (IGYWLCYVNSTINPACYALC) form a helical membrane-spanning segment. Over 468-490 (NATFKKTFKHLLMCQYRNIGTAR) the chain is Cytoplasmic.

It belongs to the G-protein coupled receptor 1 family. Muscarinic acetylcholine receptor subfamily. CHRM4 sub-subfamily. Expressed in heart and brain.

Its subcellular location is the cell membrane. The protein resides in the postsynaptic cell membrane. Its function is as follows. The muscarinic acetylcholine receptor mediates various cellular responses, including inhibition of adenylate cyclase, breakdown of phosphoinositides and modulation of potassium channels through the action of G proteins. Primary transducing effect is inhibition of adenylate cyclase. May couple to multiple functional responses in cell lines. The polypeptide is Muscarinic acetylcholine receptor M4 (CHRM4) (Gallus gallus (Chicken)).